The following is a 274-amino-acid chain: Cytochrome b-c1 complex subunit Rieske, mitochondrial (274 aa).

At 79 to 103 (SHTDIKVPDFSDYRRSEVLDKTKSS) the chain is on the mitochondrial matrix side. The chain crosses the membrane as a helical span at residues 104 to 140 (RESSDARKGFSYLVTAATAVGVTYAAKSIVTQFVSSM). The Mitochondrial intermembrane segment spans residues 141–274 (SASADVLAMS…FTGDDMVIVG (134 aa)). The region spanning 187–272 (EAAVELSQLR…YEFTGDDMVI (86 aa)) is the Rieske domain. Positions 217, 219, 236, 239, and 241 each coordinate [2Fe-2S] cluster. An intrachain disulfide couples Cys222 to Cys238.

The protein belongs to the Rieske iron-sulfur protein family. In terms of assembly, component of the ubiquinol-cytochrome c oxidoreductase (cytochrome b-c1 complex, complex III, CIII), a multisubunit enzyme composed of 11 subunits. The complex is composed of 3 respiratory subunits cytochrome b, cytochrome c1 and Rieske protein UQCRFS1, 2 core protein subunits UQCRC1/QCR1 and UQCRC2/QCR2, and 6 low-molecular weight protein subunits UQCRH/QCR6, UQCRB/QCR7, UQCRQ/QCR8, UQCR10/QCR9, UQCR11/QCR10 and subunit 9, the cleavage product of Rieske protein UQCRFS1. The complex exists as an obligatory dimer and forms supercomplexes (SCs) in the inner mitochondrial membrane with NADH-ubiquinone oxidoreductase (complex I, CI) and cytochrome c oxidase (complex IV, CIV), resulting in different assemblies (supercomplex SCI(1)III(2)IV(1) and megacomplex MCI(2)III(2)IV(2)). Incorporation of the Rieske protein UQCRFS1 is the penultimate step in complex III assembly. Interacts with TTC19, which is involved in the clearance of UQCRFS1 fragments. Component of the ubiquinol-cytochrome c oxidoreductase (cytochrome b-c1 complex, complex III, CIII). Subunit 9 corresponds to the mitochondrial targeting sequence (MTS) of Rieske protein UQCRFS1. It is retained after processing and incorporated inside complex III, where it remains bound to the complex and localizes between the 2 core subunits UQCRC1/QCR1 and UQCRC2/QCR2. The cofactor is [2Fe-2S] cluster. Post-translationally, proteolytic processing is necessary for the correct insertion of UQCRFS1 in the complex III dimer. Several fragments are generated during UQCRFS1 insertion, most probably due to the endogenous matrix-processing peptidase (MPP) activity of the 2 core protein subunits UQCRC1/QCR1 and UQCRC2/QCR2, which are homologous to the 2 mitochondrial-processing peptidase (MPP) subunits beta-MPP and alpha-MPP respectively. The action of the protease is also necessary for the clearance of the UQCRFS1 fragments.

It is found in the mitochondrion inner membrane. It catalyses the reaction a quinol + 2 Fe(III)-[cytochrome c](out) = a quinone + 2 Fe(II)-[cytochrome c](out) + 2 H(+)(out). In terms of biological role, component of the ubiquinol-cytochrome c oxidoreductase, a multisubunit transmembrane complex that is part of the mitochondrial electron transport chain which drives oxidative phosphorylation. The respiratory chain contains 3 multisubunit complexes succinate dehydrogenase (complex II, CII), ubiquinol-cytochrome c oxidoreductase (cytochrome b-c1 complex, complex III, CIII) and cytochrome c oxidase (complex IV, CIV), that cooperate to transfer electrons derived from NADH and succinate to molecular oxygen, creating an electrochemical gradient over the inner membrane that drives transmembrane transport and the ATP synthase. The cytochrome b-c1 complex catalyzes electron transfer from ubiquinol to cytochrome c, linking this redox reaction to translocation of protons across the mitochondrial inner membrane, with protons being carried across the membrane as hydrogens on the quinol. In the process called Q cycle, 2 protons are consumed from the matrix, 4 protons are released into the intermembrane space and 2 electrons are passed to cytochrome c. The Rieske protein is a catalytic core subunit containing a [2Fe-2S] iron-sulfur cluster. It cycles between 2 conformational states during catalysis to transfer electrons from the quinol bound in the Q(0) site in cytochrome b to cytochrome c1. Incorporation of UQCRFS1 is the penultimate step in complex III assembly. Component of the ubiquinol-cytochrome c oxidoreductase (cytochrome b-c1 complex, complex III, CIII). UQCRFS1 undergoes proteolytic processing once it is incorporated in the complex III dimer. One of the fragments, called subunit 9, corresponds to its mitochondrial targeting sequence (MTS). The proteolytic processing is necessary for the correct insertion of UQCRFS1 in the complex III dimer, but the persistence of UQCRFS1-derived fragments may prevent newly imported UQCRFS1 to be processed and assembled into complex III and is detrimental for the complex III structure and function. The sequence is that of Cytochrome b-c1 complex subunit Rieske, mitochondrial (UQCRFS1) from Lagothrix lagotricha (Brown woolly monkey).